We begin with the raw amino-acid sequence, 229 residues long: uncharacterized protein (229 aa).

Transmembrane regions (helical) follow at residues 1 to 21 (MFGT…GGIF), 32 to 52 (ILMQ…ITQH), 58 to 78 (YPIL…IINL), 100 to 120 (TAVL…EAAL), 139 to 159 (IVLA…LFSW), 178 to 198 (LINE…LSIL), and 206 to 226 (LNLL…HAFG).

The protein resides in the cell membrane. This is an uncharacterized protein from Bacillus subtilis (strain 168).